A 90-amino-acid chain; its full sequence is Small regulatory polypeptide of amino acid response (90 aa).

Topologically, residues 1–18 (MGAKAPRGPKVAQWAMET) are lumenal. A helical transmembrane segment spans residues 19–39 (AVIGVVVVLFVVTVAITCVLC). Residues 40–90 (CFSCDSRAQDPQGGPGRSFTVATFRQEASLFTGPVRHAQPVPSAQDFWTFM) are Cytoplasmic-facing.

As to quaternary structure, interacts with components of the lysosomal V-ATPase complex. Interacts with ATP6V0A1. Interacts with ATP6V0A2. As to expression, highly expressed in lung, heart and skeletal muscle.

It is found in the late endosome membrane. It localises to the lysosome membrane. Functionally, negative regulator of amino acid sensing and mTORC1, a signaling complex promoting cell growth in response to growth factors, energy levels and amino acids. Negatively regulates mTORC1 activation by inhibiting recruitment of mTORC1 to lysosomes upon stimulation with amino acids: acts by promoting the formation of a tightly bound supercomplex composed of the lysosomal V-ATPase, Ragulator and Rag GTPases, preventing recruitment of mTORC1. Acts as a regulator of muscle regeneration following injury by regulating mTORC1 activation. The protein is Small regulatory polypeptide of amino acid response of Homo sapiens (Human).